We begin with the raw amino-acid sequence, 503 residues long: Maturase K (503 aa).

It belongs to the intron maturase 2 family. MatK subfamily.

It localises to the plastid. The protein resides in the chloroplast. Its function is as follows. Usually encoded in the trnK tRNA gene intron. Probably assists in splicing its own and other chloroplast group II introns. This is Maturase K from Stangeria eriopus (Natal grass cycad).